A 955-amino-acid chain; its full sequence is Structure-specific endonuclease subunit SLX4 (955 aa).

Disordered stretches follow at residues 75 to 173 (QAEQ…RTTS), 189 to 231 (PVTT…TVSR), 352 to 376 (GPSN…KKPR), 539 to 608 (EMQK…PTKI), 621 to 648 (PIVA…PPPR), 705 to 784 (AAGQ…ASPD), and 819 to 846 (LDSD…EKDS). The span at 123 to 137 (RKARKTANGVTKKKR) shows a compositional bias: basic residues. Residues 150 to 159 (NEITTPTKNQ) show a composition bias toward polar residues. Residues 189-198 (PVTTSTTDLT) are compositionally biased toward low complexity. The span at 209–225 (TKSRVRKTSSAASRKKK) shows a compositional bias: basic residues. Residues 352-362 (GPSNDSKIPNQ) are compositionally biased toward polar residues. Basic and acidic residues predominate over residues 539–551 (EMQKSPSRSEPKG). The segment covering 579–601 (SANSAEHTLKTQASKSTHFASTT) has biased composition (polar residues). 2 stretches are compositionally biased toward low complexity: residues 705–720 (AAGQ…RTSA) and 727–737 (KTSTAAAAAKS). 2 stretches are compositionally biased toward basic residues: residues 738 to 748 (PTKRPVGRPRK) and 767 to 776 (KRPRGRPKKN). Positions 828–841 (SPSPSLSPEPVFSS) are enriched in low complexity.

The protein belongs to the SLX4 family. As to quaternary structure, forms a heterodimer with SLX1. In terms of processing, phosphorylated in response to DNA damage.

It localises to the nucleus. In terms of biological role, regulatory subunit of the SLX1-SLX4 structure-specific endonuclease that resolves DNA secondary structures generated during DNA repair and recombination. Has endonuclease activity towards branched DNA substrates, introducing single-strand cuts in duplex DNA close to junctions with ss-DNA. The chain is Structure-specific endonuclease subunit SLX4 from Pyricularia oryzae (strain 70-15 / ATCC MYA-4617 / FGSC 8958) (Rice blast fungus).